A 184-amino-acid polypeptide reads, in one-letter code: Large ribosomal subunit protein uL6 (184 aa).

This sequence belongs to the universal ribosomal protein uL6 family. Part of the 50S ribosomal subunit.

Its function is as follows. This protein binds to the 23S rRNA, and is important in its secondary structure. It is located near the subunit interface in the base of the L7/L12 stalk, and near the tRNA binding site of the peptidyltransferase center. This Salinibacter ruber (strain DSM 13855 / M31) protein is Large ribosomal subunit protein uL6.